A 131-amino-acid chain; its full sequence is Translation initiation factor 5A (131 aa).

The residue at position 37 (lysine 37) is a Hypusine.

It belongs to the eIF-5A family.

The protein localises to the cytoplasm. Its function is as follows. Functions by promoting the formation of the first peptide bond. The sequence is that of Translation initiation factor 5A (eIF5A) from Methanococcus maripaludis (strain C5 / ATCC BAA-1333).